The sequence spans 291 residues: Presqualene diphosphate synthase (291 aa).

A disordered region spans residues 1–23 (MTSAMKKIQPEAFSEKSSDSQAS).

It belongs to the phytoene/squalene synthase family. HpnD subfamily.

The enzyme catalyses 2 (2E,6E)-farnesyl diphosphate = presqualene diphosphate + diphosphate. It participates in secondary metabolite biosynthesis; hopanoid biosynthesis. Its function is as follows. Involved in the biosynthesis of the hopanoid precursor squalene (SQ) from farnesyl diphosphate (FPP). Catalyzes the first step, the formation of presqualene diphosphate (PSPP) from two molecules of FPP. The chain is Presqualene diphosphate synthase from Zymomonas mobilis subsp. mobilis (strain ATCC 31821 / ZM4 / CP4).